We begin with the raw amino-acid sequence, 354 residues long: MKFVDEVKIHVKAGDGGDGAVAWRREKFIPRGGPAGGDGGNGGDVVLEVDPQLSTLLDYRYIREHKARNGEKGSGSDMNGKDGADLVLRVPPGTVVKDAATGEQLCDLGAAGERVVIAKGGRGGLGNMNFASSTNQAPRYAEDGTPGAERDLVLELKLLADVGIVGYPNAGKSTLISRISRARPKIADYPFTTLTPNLGVVGWRERSFVVADIPGLIEGAHAGAGLGHQFLRHVERCRVLIHLVEGANPEPGRAPKPDLDAINAELAAYSDELARKPQIVAVTKIDVPEARAAGVKLQKLLGRRKKPVPVHLVSAVTGEGLDALLDAVGRALFKEARPHRGGGGKKLAKPRARA.

Residues 1 to 159 (MKFVDEVKIH…RDLVLELKLL (159 aa)) enclose the Obg domain. The OBG-type G domain maps to 160-333 (ADVGIVGYPN…LLDAVGRALF (174 aa)). GTP is bound by residues 166–173 (GYPNAGKS), 191–195 (FTTLT), 212–215 (DIPG), 283–286 (TKID), and 314–316 (SAV). Residues serine 173 and threonine 193 each coordinate Mg(2+).

Belongs to the TRAFAC class OBG-HflX-like GTPase superfamily. OBG GTPase family. In terms of assembly, monomer. The cofactor is Mg(2+).

The protein resides in the cytoplasm. Its function is as follows. An essential GTPase which binds GTP, GDP and possibly (p)ppGpp with moderate affinity, with high nucleotide exchange rates and a fairly low GTP hydrolysis rate. Plays a role in control of the cell cycle, stress response, ribosome biogenesis and in those bacteria that undergo differentiation, in morphogenesis control. This Anaeromyxobacter dehalogenans (strain 2CP-1 / ATCC BAA-258) protein is GTPase Obg.